Reading from the N-terminus, the 230-residue chain is Ubiquitin carboxyl-terminal hydrolase isozyme L3 (230 aa).

The region spanning 5-229 (RWLPLEANPE…LRFNAIALSA (225 aa)) is the UCH catalytic domain. The interaction with ubiquitin stretch occupies residues 8 to 13 (PLEANP). The Nucleophile role is filled by C95. The residue at position 130 (S130) is a Phosphoserine. Residues 152-159 (AHEGQTEA) are interaction with ubiquitin. Crossover loop which restricts access of large ubiquitin adducts to the active site. The active-site Proton donor is the H169. Residues 219 to 224 (ELRFNA) form an interaction with ubiquitin region.

This sequence belongs to the peptidase C12 family. Preferentially binds diubiquitin; the interaction does not hydrolyze diubiquitin but, in vitro, inhibits the hydrolyzing activity on other substrates.

Its subcellular location is the cytoplasm. It catalyses the reaction Thiol-dependent hydrolysis of ester, thioester, amide, peptide and isopeptide bonds formed by the C-terminal Gly of ubiquitin (a 76-residue protein attached to proteins as an intracellular targeting signal).. Inhibited by monoubiquitin and diubiquitin. Deubiquitinating enzyme (DUB) that controls levels of cellular ubiquitin through processing of ubiquitin precursors and ubiquitinated proteins. Thiol protease that recognizes and hydrolyzes a peptide bond at the C-terminal glycine of either ubiquitin or NEDD8. Has a 10-fold preference for Arg and Lys at position P3''. Deubiquitinates ENAC in apical compartments, thereby regulating apical membrane recycling. Indirectly increases the phosphorylation of IGFIR, AKT and FOXO1 and promotes insulin-signaling and insulin-induced adipogenesis. Required for stress-response retinal, skeletal muscle and germ cell maintenance. May be involved in working memory. Can hydrolyze UBB(+1), a mutated form of ubiquitin which is not effectively degraded by the proteasome. The sequence is that of Ubiquitin carboxyl-terminal hydrolase isozyme L3 (UCHL3) from Bos taurus (Bovine).